Consider the following 245-residue polypeptide: MTLTASSSSRAVTNSPVVVALDYHNRDDALSFVDKIDPRDCRLKVGKEMFTLFGPQFVRELQQRGFDIFLDLKFHDIPNTAAHAVAAAADLGVWMVNVHASGGARMMTAAREALVPFGKDAPLLIAVTVLTSMEASDLADLGVTLSPADYAERLAALTQKCGLDGVVCSAQEAVRFKQVFGQEFKLVTPGIRPQGSDAGDQRRIMTPEQALAAGVDYMVIGRPVTQSVDPAQTLKAINASLQRSA.

Residues D22, K44, 71–80, T131, R192, Q201, G221, and R222 each bind substrate; that span reads DLKFHDIPNT. The Proton donor role is filled by K73.

The protein belongs to the OMP decarboxylase family. Type 1 subfamily. In terms of assembly, homodimer.

The catalysed reaction is orotidine 5'-phosphate + H(+) = UMP + CO2. It functions in the pathway pyrimidine metabolism; UMP biosynthesis via de novo pathway; UMP from orotate: step 2/2. In terms of biological role, catalyzes the decarboxylation of orotidine 5'-monophosphate (OMP) to uridine 5'-monophosphate (UMP). The sequence is that of Orotidine 5'-phosphate decarboxylase from Escherichia coli O139:H28 (strain E24377A / ETEC).